Consider the following 415-residue polypeptide: Serine hydroxymethyltransferase 1 (415 aa).

(6S)-5,6,7,8-tetrahydrofolate-binding positions include Leu-117 and 121-123 (GHL). Lys-225 carries the post-translational modification N6-(pyridoxal phosphate)lysine. Position 349–351 (349–351 (SPF)) interacts with (6S)-5,6,7,8-tetrahydrofolate.

It belongs to the SHMT family. In terms of assembly, homodimer. It depends on pyridoxal 5'-phosphate as a cofactor.

Its subcellular location is the cytoplasm. The catalysed reaction is (6R)-5,10-methylene-5,6,7,8-tetrahydrofolate + glycine + H2O = (6S)-5,6,7,8-tetrahydrofolate + L-serine. Its pathway is one-carbon metabolism; tetrahydrofolate interconversion. It functions in the pathway amino-acid biosynthesis; glycine biosynthesis; glycine from L-serine: step 1/1. Its function is as follows. Catalyzes the reversible interconversion of serine and glycine with tetrahydrofolate (THF) serving as the one-carbon carrier. This reaction serves as the major source of one-carbon groups required for the biosynthesis of purines, thymidylate, methionine, and other important biomolecules. Also exhibits THF-independent aldolase activity toward beta-hydroxyamino acids, producing glycine and aldehydes, via a retro-aldol mechanism. The chain is Serine hydroxymethyltransferase 1 from Sulfurimonas denitrificans (strain ATCC 33889 / DSM 1251) (Thiomicrospira denitrificans (strain ATCC 33889 / DSM 1251)).